Here is a 113-residue protein sequence, read N- to C-terminus: Tubulin-folding cofactor A (113 aa).

Residues 83–113 form a disordered region; sequence LEETDEKEGPEIEDAKKTVADVEKQFPTEDA. The segment covering 89–113 has biased composition (basic and acidic residues); sequence KEGPEIEDAKKTVADVEKQFPTEDA.

The protein belongs to the TBCA family. Monomer. Supercomplex made of cofactors A to E. Cofactors A and D function by capturing and stabilizing tubulin in a quasi-native conformation. Cofactor E binds to the cofactor D-tubulin complex; interaction with cofactor C then causes the release of tubulin polypeptides that are committed to the native state. Interacts with TUBB9. As to expression, expressed in leaves, roots, flowers and stems.

In terms of biological role, tubulin-folding protein involved in the control of the alpha-/beta-tubulin monomer balance. Functions as a reservoir of bound and non-toxic beta-tubulin. Required in the developing embryo. The protein is Tubulin-folding cofactor A (TFCA) of Arabidopsis thaliana (Mouse-ear cress).